Here is a 256-residue protein sequence, read N- to C-terminus: Anamorsin homolog (256 aa).

The segment at 1-136 (MNSLSLELNK…DTNESSTINI (136 aa)) is N-terminal SAM-like domain. Residues 126–148 (WDTNESSTINIPSTSSNNPWASI) form a disordered region. A compositionally biased stretch (low complexity) spans 131–144 (SSTINIPSTSSNNP). The segment at 137–166 (PSTSSNNPWASIEGGDRINENDLVSENDKT) is linker. Residues C176, C185, C188, and C190 each contribute to the [2Fe-2S] cluster site. Positions 176-190 (CEVGKTKKACKNCTC) are fe-S binding site A. Positions 217, 220, 228, and 231 each coordinate [4Fe-4S] cluster. 2 consecutive short sequence motifs (cx2C motif) follow at residues 217–220 (CGNC) and 228–231 (CGGC). A fe-S binding site B region spans residues 217 to 231 (CGNCSLGDAFRCGGC).

The protein belongs to the anamorsin family. In terms of assembly, monomer. The cofactor is [2Fe-2S] cluster. [4Fe-4S] cluster is required as a cofactor.

Its subcellular location is the cytoplasm. The protein localises to the mitochondrion intermembrane space. In terms of biological role, component of the cytosolic iron-sulfur (Fe-S) protein assembly (CIA) machinery. Required for the maturation of extramitochondrial Fe-S proteins. Part of an electron transfer chain functioning in an early step of cytosolic Fe-S biogenesis, facilitating the de novo assembly of a [4Fe-4S] cluster on the cytosolic Fe-S scaffold complex. Electrons are transferred from NADPH via a FAD- and FMN-containing diflavin oxidoreductase. Together with the diflavin oxidoreductase, also required for the assembly of the diferric tyrosyl radical cofactor of ribonucleotide reductase (RNR), probably by providing electrons for reduction during radical cofactor maturation in the catalytic small subunit. The sequence is that of Anamorsin homolog (rsc43) from Dictyostelium discoideum (Social amoeba).